The sequence spans 576 residues: Vesicular glutamate transporter 1 (576 aa).

Over 1–63 (MEFRKEEFKK…CTCFGLPRRY (63 aa)) the chain is Cytoplasmic. The helical transmembrane segment at 64–84 (IIAIMSGLGFCISFGIRCNLG) threads the bilayer. The Vesicular segment spans residues 85 to 116 (VAIVSMVNNNTVYKGNKLVIEQAQFNWDPETV). The N-linked (GlcNAc...) asparagine glycan is linked to Asn93. A helical membrane pass occupies residues 117–137 (GMIHGSFFWGYIVTQIPGGYI). At 138–140 (CQK) the chain is on the cytoplasmic side. A helical membrane pass occupies residues 141 to 161 (FAANRVFGFAIVATSTLNMLI). The Vesicular segment spans residues 162-168 (PSAARVH). The chain crosses the membrane as a helical span at residues 169–189 (FACVICVRILQGLVEGVTYPA). Over 190 to 208 (CHGIWSKWAPPLERSRLAT) the chain is Cytoplasmic. Residues 209–229 (TAFCGSYAGAVVAMPLAGVLV) traverse the membrane as a helical segment. At 230-236 (QYSGWSS) the chain is on the vesicular side. Residues 237-257 (VFYVYGSFGITWYMFWILVSY) form a helical membrane-spanning segment. The Cytoplasmic segment spans residues 258–297 (ESPAQHPTISEEERKYIEESIGESTGFMNPMAKFKAPWRK). A helical membrane pass occupies residues 298 to 320 (FFTSMPVYAIIVANFCRSWTFYL). The Vesicular segment spans residues 321 to 341 (LLISQPAYFEEVFGFAISKVG). A helical transmembrane segment spans residues 342-362 (LLSALPHLVMTIIVPIGGQIA). The Cytoplasmic segment spans residues 363–378 (DFLRTKRIMSTTNVRK). The chain crosses the membrane as a helical span at residues 379-399 (MMNCGGFGMEATLLLVVGYSH). Over 400 to 401 (SR) the chain is Vesicular. The chain crosses the membrane as a helical span at residues 402 to 422 (GVAISFLVLAVGFSGFAISGF). The Cytoplasmic segment spans residues 423-435 (NVNHLDIAPRYAS). The helical transmembrane segment at 436-456 (ILMGISNGVGTLSGMVCPLIV) threads the bilayer. Topologically, residues 457–469 (GAMTKHKTREEWQ) are vesicular. A helical transmembrane segment spans residues 470-490 (YVFLIASLVHYGGVVFYGIFA). The Cytoplasmic portion of the chain corresponds to 491–576 (SGEKQPWAEP…YGTVAERDLS (86 aa)). Residues 517 to 552 (ADESEEQTQAHGGYGSYGATQTTSQQNGGWATDWEK) form a disordered region. Positions 534–545 (GATQTTSQQNGG) are enriched in polar residues.

The protein belongs to the major facilitator superfamily. Sodium/anion cotransporter family. VGLUT subfamily.

Its subcellular location is the cytoplasmic vesicle. It localises to the secretory vesicle. The protein localises to the synaptic vesicle membrane. The protein resides in the cell membrane. It is found in the synapse. Its subcellular location is the synaptosome. The enzyme catalyses L-glutamate(out) = L-glutamate(in). It catalyses the reaction chloride(in) = chloride(out). It carries out the reaction 3 Na(+)(out) + phosphate(out) = 3 Na(+)(in) + phosphate(in). The catalysed reaction is phosphate(in) = phosphate(out). The enzyme catalyses K(+)(in) + H(+)(out) = K(+)(out) + H(+)(in). Chloride channel activity is allosterically activated by lumenal H(+) and Cl(-) leading to synaptic vesicles acidification. The L-glutamate transport activity is allosterically activated by lumenal H(+) and Cl(-). The allosteric activation by H(+) efficiently prevents non-vesicular efflux across the plasma membrane, thereby restricting L-glutamate transport activity to acidic membranes such as synaptic vesicles. In terms of biological role, multifunctional transporter that transports L-glutamate as well as multiple ions such as chloride, proton, potassium, sodium and phosphate. At the synaptic vesicle membrane, mainly functions as an uniporter which transports preferentially L-glutamate but also phosphate from the cytoplasm into synaptic vesicles at presynaptic nerve terminals of excitatory neural cells. The L-glutamate or phosphate uniporter activity is electrogenic and is driven by the proton electrochemical gradient, mainly by the electrical gradient established by the vacuolar H(+)-ATPase across the synaptic vesicle membrane. In addition, functions as a chloride channel that allows a chloride permeation through the synaptic vesicle membrane that affects the proton electrochemical gradient and promotes synaptic vesicles acidification. Moreover, may function as a K(+)/H(+) antiport allowing to maintain the electrical gradient and to decrease chemical gradient and therefore sustain vesicular glutamate uptake. The vesicular K(+)/H(+) antiport activity is electroneutral. At the plasma membrane, following exocytosis, functions as a symporter of Na(+) and phosphate from the extracellular space to the cytoplasm allowing synaptic phosphate homeostasis regulation. The symporter activity is driven by an inside negative membrane potential and is electrogenic. Is necessary for synaptic signaling of visual-evoked responses from photoreceptors. This Xenopus laevis (African clawed frog) protein is Vesicular glutamate transporter 1.